A 335-amino-acid chain; its full sequence is Pregnancy-specific beta-1-glycoprotein 5 (335 aa).

Residues 1–34 (MGPLSAPPCTQHITWKGLLLTASLLNFWNLPITA) form the signal peptide. In terms of domain architecture, Ig-like V-type spans 35-144 (QVTIEALPPK…TGYFTFNLYL (110 aa)). 2 N-linked (GlcNAc...) asparagine glycosylation sites follow: Asn-104 and Asn-111. Residues 127-129 (RGD) carry the Cell attachment site motif. 2 consecutive Ig-like C2-type domains span residues 147-234 (PKPY…VTLN) and 239-317 (PDLP…KSMT). 2 disulfide bridges follow: Cys-169–Cys-217 and Cys-261–Cys-301. Asn-175 and Asn-210 each carry an N-linked (GlcNAc...) asparagine glycan.

Belongs to the immunoglobulin superfamily. CEA family. As to expression, synthesized by syncytiotrophoblast of the placenta.

It is found in the secreted. The protein is Pregnancy-specific beta-1-glycoprotein 5 (PSG5) of Homo sapiens (Human).